A 1235-amino-acid polypeptide reads, in one-letter code: DNA polymerase catalytic subunit (1235 aa).

Disordered regions lie at residues 640-691 (QGRF…ETAG) and 1098-1134 (AAAP…ASKP). Basic and acidic residues predominate over residues 650-661 (APKRPAAAREDE). Acidic residues predominate over residues 662-675 (ERPEEEGEDEDERE). Basic and acidic residues predominate over residues 676 to 691 (EGGGEREPDGARETAG).

This sequence belongs to the DNA polymerase type-B family. Forms a complex with the ssDNA-binding protein UL29, the DNA polymerase processivity factor, and the alkaline exonuclease. Interacts with the putative helicase-primase complex subunit UL8; this interaction may coordinate leading and lagging strand DNA synthesis at the replication fork.

It is found in the host nucleus. It carries out the reaction DNA(n) + a 2'-deoxyribonucleoside 5'-triphosphate = DNA(n+1) + diphosphate. It catalyses the reaction Endonucleolytic cleavage to 5'-phosphomonoester.. In terms of biological role, replicates viral genomic DNA. The replication complex is composed of six viral proteins: the DNA polymerase, processivity factor, primase, primase-associated factor, helicase, and ssDNA-binding protein. Additionally, the polymerase contains an intrinsic ribonuclease H (RNase H) activity that specifically degrades RNA/DNA heteroduplexes or duplex DNA substrates in the 5' to 3' direction. Therefore, it can catalyze the excision of the RNA primers that initiate the synthesis of Okazaki fragments at a replication fork during viral DNA replication. This Homo sapiens (Human) protein is DNA polymerase catalytic subunit.